A 485-amino-acid polypeptide reads, in one-letter code: Vacuolar fusion protein CCZ1 homolog (485 aa).

It belongs to the CCZ1 family. In terms of assembly, component of the Mon1-Ccz1 guanyl-nucleotide exchange factor complex made up of Mon1, Ccz1 and Bulli; the interaction of Bulli with the Mon1-Ccz1 heterodimer is mediated via the C-terminal Mic1 domain of Bulli. Mon1 and Ccz1 form a stable complex which displays Rab7 GEF activity with or without Bulli; GEF activity is enhanced by Bulli possibly by improving membrane association of the complex. Interacts with Rab5 and Rab7; preferentially binds GTP-bound Rab5 and GDP-bound Rab7.

The protein localises to the cytoplasm. It localises to the cytosol. With respect to regulation, the Rab7 guanyl-nucleotide exchange factor (GEF) activity of the Mon1-Ccz1 complex is autoinhibited by the N-terminal disordered region of Mon1. GEF activity is stimulated by Rab5-mediated recruitment to membranes. Functionally, part of the Mon1-Ccz1 guanyl-nucleotide exchange factor complex specific for Rab7 that promotes the exchange of GDP to GTP, converting Rab7 from an inactive GDP-bound form into an active GTP-bound form. Required for recruitment of Rab7 to endosomal and autophagosomal membranes to mediate endolysosomal and autolysosomal vesicle maturation. Required for fusion of multivesicular bodies and lysosomes but not their formation or trafficking. Involved in the replacement of Rab5 (and possibly Rab4) with Rab7, also known as Rab conversion or the Rab cascade, during endosomal maturation. The Mon1-Ccz1 complex is recruited to phosphatidylinositol 3-phosphate (PtdIns[3]P) enriched membranes by Rab5, which stimulates recruitment and guanyl-nucleotide exchange of Rab7. Together with Rab7 required for autolysosome formation in fat cells and autophagic degradation during starvation-induced basal and developmental autophagy. This chain is Vacuolar fusion protein CCZ1 homolog, found in Drosophila melanogaster (Fruit fly).